An 822-amino-acid chain; its full sequence is MGNMRRLLIFAVLVILTVISNSKSSYKYDGSLFSSKELDYDETDTKAMGSVFSRYMSDSDAQLILDLDFFRHFFNYAEAYRDGAEEGNLELMKYAVEMVEKLKSFDISMACVGDMMHLAWTGVEYATHVEEHKNCSDCKCTPLFQQKKSERHWIFNVFDAMGKVPAGIMSGNNLWVGSWSTCRKIDVVKNAQGQKWKGQYCLATIDAYERDNPLVYFGNMMSGPPDKHCYDKTVKNVTDDGFCFALFPVLKFGVCMPNTCTNHDVKQMLSFAIRATEGAVGTKSVCNVDVECRAESYSDAMSENGLAMFALYLLIATVVLVTFGTLYDLFIVSKAPQDEKNSSAFNHPFIKFILAFSMYTNGSEILQSKKNDREINSLHGVRFLSMCWIILGHTYYYIGTSLTTDNLVPTLINFPKQFHTQIIVQAPLAVDSFFFLSGMLAAFSFFKKTMKADPNHPPKLSAFNWQTWPMYYYKRYIRITPTYIIVMLFDVTLFTYISNGPFWRPIERQGCSIAWWTNLIYLNNFLLQDQECCMGWTWYLANDMQFHIFLMPLLVIVFLKWGMKVGLGLSTGLIALSSLIRLIITQIYGYPPAPILTAKLQIVYQLNDYWNDVYVRPYIRCTPFIVGIVVAYLLNAWTTREQKDLKIKLERRTVIICWCTSTVLGLYSVFGLYWFAKTGDISKPWEILYTIFGTPAYALALGWVVFACTTGNGGPVDTILSWRLFVPLSKITFCAYLLHPIMLQIYNLSRPQPFHFTTFIQMIRYTVEAVFASYTIAFFFSLAFEKPLNKIDEMLFNSKKMMNGENGNTTEMVPLNKIRNSD.

The first 24 residues, methionine 1 to serine 24, serve as a signal peptide directing secretion. N-linked (GlcNAc...) asparagine glycosylation is present at asparagine 236. 3 helical membrane-spanning segments follow: residues leucine 306–leucine 326, proline 617–tryptophan 637, and isoleucine 655–phenylalanine 675.

The protein belongs to the acyltransferase 3 family. As to expression, in L1 larvae through to adult, hyp3 and hyp5, the most anterior cells in the hypodermis, and in intestine. Other hypodermal cells show weaker expression.

The protein resides in the membrane. Its function is as follows. Plays a role in the uptake of a range of molecules including lipids and xenobiotic compounds from the intestine to surrounding tissues. Mediates transport of lipids from intestine to the reproductive tract. Required for efficient yolk transport into oocytes. Vital for embryonic development. This is Nose resistant to fluoxetine protein 6 (nrf-6) from Caenorhabditis elegans.